The following is a 601-amino-acid chain: NADPH--cytochrome P450 reductase (601 aa).

Residues 25–169 (IVVFYGSQTG…DFVTWREQFW (145 aa)) enclose the Flavodoxin-like domain. Residues 31–36 (SQTGTG), 83–86 (ATYG), 118–127 (LGDKTYEHYN), and Asp-153 each bind FMN. The FAD-binding FR-type domain occupies 224 to 425 (KNPFLAPVTV…ICAVLVEYXT (202 aa)). Residues 399 to 402 (RYYS), 417 to 419 (CAV), Tyr-423, and 427 to 430 (GVAT) each bind FAD. NADP(+) contacts are provided by residues Thr-458, 519–520 (SR), 525–529 (KVYVQ), and Asp-562. Trp-600 is a binding site for FAD.

It belongs to the NADPH--cytochrome P450 reductase family. The protein in the N-terminal section; belongs to the flavodoxin family. In the C-terminal section; belongs to the flavoprotein pyridine nucleotide cytochrome reductase family. FAD serves as cofactor. FMN is required as a cofactor.

Its subcellular location is the endoplasmic reticulum membrane. It carries out the reaction 2 oxidized [cytochrome P450] + NADPH = 2 reduced [cytochrome P450] + NADP(+) + H(+). Functionally, this enzyme is required for electron transfer from NADP to cytochrome P450 in microsomes. It can also provide electron transfer to heme oxygenase and cytochrome B5. The chain is NADPH--cytochrome P450 reductase from Salmo trutta (Brown trout).